The chain runs to 283 residues: Putative cytochrome b-c1 complex subunit Rieske-like protein 1 (283 aa).

A helical transmembrane segment spans residues 116–149; it reads TEARKGFSYLVTGVTTVGVAYAAKNAVTQFVSSM. Residues 196–281 form the Rieske domain; sequence EAAVELSQLR…YEFTSDDMVI (86 aa). The [2Fe-2S] cluster site is built by C226, H228, C245, and H248. C231 and C247 are oxidised to a cystine.

The protein belongs to the Rieske iron-sulfur protein family. The cofactor is [2Fe-2S] cluster.

It localises to the membrane. The polypeptide is Putative cytochrome b-c1 complex subunit Rieske-like protein 1 (UQCRFS1P1) (Homo sapiens (Human)).